The chain runs to 326 residues: Protein phosphatase 1 regulatory subunit SDS22 homolog (326 aa).

Positions 1 to 22 are disordered; sequence MSNDKSAEVVVLPRENDEESKE. LRR repeat units lie at residues 35 to 57, 58 to 80, 81 to 102, 103 to 126, 128 to 146, 147 to 170, 172 to 190, 191 to 212, 213 to 236, 238 to 256, 257 to 280, and 281 to 304; these read DIDS…LTGF, PKIE…ISSL, VTLT…LESL, VNLV…KLTK, ETLY…LEAL, TQLK…HLVN, DELF…VETL, QKLS…VEQL, NNLK…PLTN, LLLD…VERL, ESLN…QLSK, and LKGL…QYRR.

The protein belongs to the SDS22 family.

It localises to the nucleus. In terms of biological role, regulatory subunit of protein phosphatase 1. The protein is Protein phosphatase 1 regulatory subunit SDS22 homolog (sds-22) of Caenorhabditis elegans.